The sequence spans 79 residues: Large ribosomal subunit protein uL22 (79 aa).

The protein belongs to the universal ribosomal protein uL22 family. As to quaternary structure, part of the 50S ribosomal subunit.

In terms of biological role, this protein binds specifically to 23S rRNA; its binding is stimulated by other ribosomal proteins, e.g. L4, L17, and L20. It is important during the early stages of 50S assembly. It makes multiple contacts with different domains of the 23S rRNA in the assembled 50S subunit and ribosome. Functionally, the globular domain of the protein is located near the polypeptide exit tunnel on the outside of the subunit, while an extended beta-hairpin is found that lines the wall of the exit tunnel in the center of the 70S ribosome. This Prunus armeniaca phytoplasma protein is Large ribosomal subunit protein uL22 (rplV).